The following is a 359-amino-acid chain: Fructose-bisphosphate aldolase class 2 (359 aa).

Serine 61 is a D-glyceraldehyde 3-phosphate binding site. Aspartate 110 serves as the catalytic Proton donor. The Zn(2+) site is built by histidine 111, aspartate 145, glutamate 175, and histidine 227. Glycine 228 contacts dihydroxyacetone phosphate. Histidine 265 contributes to the Zn(2+) binding site. Residues 266 to 268 (GGS) and 287 to 290 (NIDT) contribute to the dihydroxyacetone phosphate site.

Belongs to the class II fructose-bisphosphate aldolase family. The cofactor is Zn(2+).

It carries out the reaction beta-D-fructose 1,6-bisphosphate = D-glyceraldehyde 3-phosphate + dihydroxyacetone phosphate. It functions in the pathway carbohydrate degradation; glycolysis; D-glyceraldehyde 3-phosphate and glycerone phosphate from D-glucose: step 4/4. Its function is as follows. Catalyzes the aldol condensation of dihydroxyacetone phosphate (DHAP or glycerone-phosphate) with glyceraldehyde 3-phosphate (G3P) to form fructose 1,6-bisphosphate (FBP) in gluconeogenesis and the reverse reaction in glycolysis. The protein is Fructose-bisphosphate aldolase class 2 (fbaA) of Buchnera aphidicola subsp. Schizaphis graminum (strain Sg).